The chain runs to 352 residues: Protein RecA (352 aa).

74–81 (GPESSGKT) lines the ATP pocket.

It belongs to the RecA family.

The protein localises to the cytoplasm. Its function is as follows. Can catalyze the hydrolysis of ATP in the presence of single-stranded DNA, the ATP-dependent uptake of single-stranded DNA by duplex DNA, and the ATP-dependent hybridization of homologous single-stranded DNAs. It interacts with LexA causing its activation and leading to its autocatalytic cleavage. The polypeptide is Protein RecA (Ralstonia nicotianae (strain ATCC BAA-1114 / GMI1000) (Ralstonia solanacearum)).